A 293-amino-acid chain; its full sequence is MEAMTLFDSPPILITGMSGGGLTSAAKVLEDKGYYVAHNIPPKAIVDLLKLCASPESPVSKIAAVTDVRSRLFPGSLAETLDELEQLDMKPTLLFLDARDDVLIRRFDSVRRTHPLQDGETLKAGIQRERAAVQSIRERADIIIDTTNLSVHDLRRAIEASFGEMGHELQHVTLESFGFKHGSPRDADLVVDVRFLPNPYWVPELRGYRGTDEPVADYVLSQDAAEPFIDHFITMFDSMLAGYRHEGKNFITVGIGCTGGHHRSVAVTEEIARRLRERGDLDVSTLHRDIARD.

Glycine 16–threonine 23 contacts ATP. Aspartate 67–serine 70 provides a ligand contact to GTP.

The protein belongs to the RapZ-like family.

Displays ATPase and GTPase activities. This Corynebacterium aurimucosum (strain ATCC 700975 / DSM 44827 / CIP 107346 / CN-1) (Corynebacterium nigricans) protein is Nucleotide-binding protein cauri_1197.